The chain runs to 628 residues: MGYEAGQYDVVVVGAGHAGVEAALASARQGAKTLVLTINLDMVAFMPCNPSVGGPAKGIVVREIDALGGEMAKNIDKTHIQMRLLNTGKGPAVRALRAQADKFQYQHEMKKTLENEPNLTMLQGMVERLLIEDGECRGVITQTGAEYRSKTVVLTTGTFLRGKIILGDLSYSSGPNNQQPSIKLSEHLEELGFDLVRFKTGTPPRVNSHSIDYSKTEIQPGDEVPRAFSYETVEYITDQLPCWLTYTSPETHEIIDNNLHRSPMYSGMIKGTGPRYCPSIEDKVVRFNDKPRHQIFLEPEGRNTQEVYVQGLSTSLPEDVQRKMLSTIPGLENVQMMRAGYAIEYDAIVPTQLWPTLETKKIPGLFTAGQINGTSGYEEAAGQGIMAGINAGRKALGKEEVILSRSDAYIGVLIDDLVTKGTNEPYRLLTSRAEYRLLLRHDNADLRLTEIGYQIGLISEERYQKFQEKKAAIEAEKKRLHSVIIKPTKENQEYIRSLGGSELKDGIRATDLMKRPEMNYETVTALAPPEQKVAGDVAEQVEIQIKYEGYIEKSLQQVEKLKKMENKKIPDRIDYDAIKGIATEARQKLKEVRPLSVAQASRISGVNPADISILLVYLEQGRIAKVAE.

Residues 14–19, valine 126, and serine 181 each bind FAD; that span reads GAGHAG. Position 273–287 (273–287) interacts with NAD(+); that stretch reads GPRYCPSIEDKVVRF. Glutamine 370 is an FAD binding site.

It belongs to the MnmG family. In terms of assembly, homodimer. Heterotetramer of two MnmE and two MnmG subunits. It depends on FAD as a cofactor.

It localises to the cytoplasm. In terms of biological role, NAD-binding protein involved in the addition of a carboxymethylaminomethyl (cmnm) group at the wobble position (U34) of certain tRNAs, forming tRNA-cmnm(5)s(2)U34. In Bacillus licheniformis (strain ATCC 14580 / DSM 13 / JCM 2505 / CCUG 7422 / NBRC 12200 / NCIMB 9375 / NCTC 10341 / NRRL NRS-1264 / Gibson 46), this protein is tRNA uridine 5-carboxymethylaminomethyl modification enzyme MnmG.